The primary structure comprises 359 residues: Probable dual-specificity RNA methyltransferase RlmN (359 aa).

E100 serves as the catalytic Proton acceptor. One can recognise a Radical SAM core domain in the interval 106–340 (TDKRLTVCVS…VSVRASRGRD (235 aa)). C113 and C345 form a disulfide bridge. Residues C120, C124, and C127 each contribute to the [4Fe-4S] cluster site. S-adenosyl-L-methionine-binding positions include 167 to 168 (GE), S197, 226 to 228 (SLH), and N302. C345 (S-methylcysteine intermediate) is an active-site residue.

It belongs to the radical SAM superfamily. RlmN family. The cofactor is [4Fe-4S] cluster.

The protein resides in the cytoplasm. It carries out the reaction adenosine(2503) in 23S rRNA + 2 reduced [2Fe-2S]-[ferredoxin] + 2 S-adenosyl-L-methionine = 2-methyladenosine(2503) in 23S rRNA + 5'-deoxyadenosine + L-methionine + 2 oxidized [2Fe-2S]-[ferredoxin] + S-adenosyl-L-homocysteine. The catalysed reaction is adenosine(37) in tRNA + 2 reduced [2Fe-2S]-[ferredoxin] + 2 S-adenosyl-L-methionine = 2-methyladenosine(37) in tRNA + 5'-deoxyadenosine + L-methionine + 2 oxidized [2Fe-2S]-[ferredoxin] + S-adenosyl-L-homocysteine. Functionally, specifically methylates position 2 of adenine 2503 in 23S rRNA and position 2 of adenine 37 in tRNAs. In Prochlorococcus marinus (strain NATL2A), this protein is Probable dual-specificity RNA methyltransferase RlmN.